The following is a 2025-amino-acid chain: E3 ubiquitin-protein ligase TRIP12 (2025 aa).

The segment covering 1–10 (MSNRPNNNPG) has biased composition (polar residues). The disordered stretch occupies residues 1 to 404 (MSNRPNNNPG…SGESESDDSE (404 aa)). Ser2 carries the post-translational modification N-acetylserine. Ser12 carries the post-translational modification Phosphoserine. A compositionally biased stretch (polar residues) spans 18-27 (RNTAGAQPQD). Positions 48 to 70 (DPDRANTSERQKTGQVPKKDNSR) are enriched in basic and acidic residues. A phosphoserine mark is found at Ser77, Ser85, and Ser100. A compositionally biased stretch (polar residues) spans 78-88 (PDYNRTNSPSS). Positions 119 to 132 (EQQLKSAQLPSTSK) are enriched in polar residues. Composition is skewed to low complexity over residues 154 to 166 (SSCV…SEST) and 177 to 215 (KLAS…ASST). The residue at position 181 (Lys181) is an N6-acetyllysine. A compositionally biased stretch (polar residues) spans 280-290 (PGSSKSETSKP). A phosphoserine mark is found at Ser310 and Ser312. Residues 326–338 (QKTTGSCASTSRR) are compositionally biased toward polar residues. Over residues 346 to 358 (GAAEARRQEKMAD) the composition is skewed to basic and acidic residues. A compositionally biased stretch (polar residues) spans 360–371 (ESNQETVNSSAA). A compositionally biased stretch (low complexity) spans 379-397 (GAAASSSVAGAVGMTTSGE). One can recognise a WWE domain in the interval 755–869 (MLKKGNAQNT…DPELAKSFIK (115 aa)). The interval 970–1077 (ESLLTSPPKA…QSPKSSFLAS (108 aa)) is disordered. Ser975 is modified (phosphoserine). Residues 983–1006 (GSGSLGSTTPASSGTATAATNASA) show a composition bias toward low complexity. Phosphoserine occurs at positions 1024 and 1030. The segment covering 1034–1047 (KRKRLPKRGPRRPK) has biased composition (basic residues). Ser1049 bears the Phosphoserine mark. Positions 1050–1059 (PPRDDDKVDN) are enriched in basic and acidic residues. Over residues 1062 to 1073 (KSPTTTQSPKSS) the composition is skewed to low complexity. Phosphoserine is present on residues Ser1063, Ser1350, Ser1355, Ser1362, and Ser1409. Residue Thr1410 is modified to Phosphothreonine. 2 disordered regions span residues 1441–1466 (TKDC…NAKK) and 1601–1620 (TNPE…PRLD). At Lys1458 the chain carries N6-acetyllysine. Ser1460 is subject to Phosphoserine. Residues 1529-1603 (EIIPTSEFIN…AMQRLLDTNP (75 aa)) are K-box. The HECT domain occupies 1918-2025 (PDHGYTHDSR…REGQQSFHLS (108 aa)). Residue Cys1992 is the Glycyl thioester intermediate of the active site.

The protein belongs to the UPL family. K-HECT subfamily. As to quaternary structure, interacts with MYC; leading to disrupt interaction with isoform p19ARF/ARF of CDKN2A. Interacts with TRADD; leading to disrupt interaction with isoform p19ARF/ARF of CDKN2A. Interacts with SMARCC1; leading to disrupt interaction with SMARCE1.

The protein resides in the nucleus. It is found in the nucleoplasm. The catalysed reaction is S-ubiquitinyl-[E2 ubiquitin-conjugating enzyme]-L-cysteine + [acceptor protein]-L-lysine = [E2 ubiquitin-conjugating enzyme]-L-cysteine + N(6)-ubiquitinyl-[acceptor protein]-L-lysine.. The protein operates within protein modification; protein ubiquitination. E3 ubiquitin-protein ligase involved in ubiquitin fusion degradation (UFD) pathway and regulation of DNA repair. Part of the ubiquitin fusion degradation (UFD) pathway, a process that mediates ubiquitination of protein at their N-terminus, regardless of the presence of lysine residues in target proteins. Acts as a key regulator of DNA damage response by acting as a suppressor of RNF168, an E3 ubiquitin-protein ligase that promotes accumulation of 'Lys-63'-linked histone H2A and H2AX at DNA damage sites, thereby acting as a guard against excessive spreading of ubiquitinated chromatin at damaged chromosomes. In normal cells, mediates ubiquitination and degradation of isoform p19ARF/ARF of CDKN2A, a lysine-less tumor suppressor required for p53/TP53 activation under oncogenic stress. In cancer cells, however, isoform p19ARF/ARF and TRIP12 are located in different cell compartments, preventing isoform p19ARF/ARF ubiquitination and degradation. Does not mediate ubiquitination of isoform p16-INK4a of CDKN2A. Also catalyzes ubiquitination of NAE1 and SMARCE1, leading to their degradation. Ubiquitination and degradation of target proteins is regulated by interaction with proteins such as MYC, TRADD or SMARCC1, which disrupt the interaction between TRIP12 and target proteins. Mediates ubiquitination of ASXL1: following binding to N(6)-methyladenosine methylated DNA, ASXL1 is ubiquitinated by TRIP12, leading to its degradation and subsequent inactivation of the PR-DUB complex. The polypeptide is E3 ubiquitin-protein ligase TRIP12 (Trip12) (Mus musculus (Mouse)).